We begin with the raw amino-acid sequence, 930 residues long: Translation initiation factor IF-2 (930 aa).

Over residues 50–67 (FKPAAAPKVEAKPAAPKV) the composition is skewed to low complexity. Disordered stretches follow at residues 50–195 (FKPA…PRID) and 260–346 (EVVP…HELP). Composition is skewed to basic and acidic residues over residues 68–90 (SAEKKTEKSEPAKPAVAKEEAKP) and 110–125 (FKAEREARAKEQAERR). Over residues 129–141 (KGNNRDQQQNGNR) the composition is skewed to low complexity. Composition is skewed to basic and acidic residues over residues 157–167 (RDNRRFNDQAK) and 262–295 (VPEKKEPAVDTRRKKQARPDKNRDDYDHEEDGPR). Over residues 309-318 (NQKNSNWNNN) the composition is skewed to low complexity. Residues 337–346 (VTERKFHELP) show a composition bias toward basic and acidic residues. Residues 432–599 (ERPPVVTIMG…TVLLVAEIQE (168 aa)) enclose the tr-type G domain. A G1 region spans residues 441-448 (GHVDHGKT). 441-448 (GHVDHGKT) contributes to the GTP binding site. The tract at residues 466 to 470 (GITQH) is G2. Positions 487–490 (DTPG) are G3. Residues 487–491 (DTPGH) and 541–544 (NKID) contribute to the GTP site. The tract at residues 541–544 (NKID) is G4. The segment at 577-579 (SAK) is G5.

Belongs to the TRAFAC class translation factor GTPase superfamily. Classic translation factor GTPase family. IF-2 subfamily.

It is found in the cytoplasm. One of the essential components for the initiation of protein synthesis. Protects formylmethionyl-tRNA from spontaneous hydrolysis and promotes its binding to the 30S ribosomal subunits. Also involved in the hydrolysis of GTP during the formation of the 70S ribosomal complex. This chain is Translation initiation factor IF-2, found in Streptococcus pneumoniae (strain ATCC BAA-255 / R6).